A 264-amino-acid polypeptide reads, in one-letter code: Catenin delta-2 (264 aa).

4 ARM repeats span residues 20 to 59, 64 to 104, 120 to 162, and 166 to 211; these read NKIKAEIRRQGGIQLLVDLLDHRMTEVHRSACGALRNLVY, DDNK…NLSS, LTNA…NVSS, and EARR…NLSY. Positions 238-264 are disordered; that stretch reads GKDAESSGCWGKKKKKKKSQDQWDGVG.

The protein belongs to the beta-catenin family. In terms of assembly, binds to E-cadherin at a juxtamembrane site within the cytoplasmic domain. Binds to PSEN1. Interacts with ZBTB33. Interacts with ARHGEF28. Interacts (via the extreme C-terminus) with FRMPD2 (via the PDZ 2 domain). Interacts with PDZD2. Interacts with CDK5. Interacts with CTNBB1. Interacts with GSK3A and GSK3B. Interacts with DNM2. Interacts with CCDC85B. Post-translationally, O-glycosylated. Phosphorylated by CDK5. Phosphorylated by GSK3B. As to expression, predominantly expressed in brain; accumulates in cortical neurons (at protein level).

It localises to the nucleus. The protein resides in the cell junction. Its subcellular location is the adherens junction. The protein localises to the cell projection. It is found in the dendrite. It localises to the perikaryon. In terms of biological role, has a critical role in neuronal development, particularly in the formation and/or maintenance of dendritic spines and synapses. Involved in the regulation of canonical Wnt signaling. It probably acts on beta-catenin turnover, facilitating beta-catenin interaction with GSK3B, phosphorylation, ubiquitination and degradation. May be involved in neuronal cell adhesion and tissue morphogenesis and integrity by regulating adhesion molecules. Functions as a transcriptional activator when bound to ZBTB33. In Rattus norvegicus (Rat), this protein is Catenin delta-2 (Ctnnd2).